Here is a 221-residue protein sequence, read N- to C-terminus: Catechol O-methyltransferase (221 aa).

Residues Val-41, Gly-65, Leu-67, Ser-71, Glu-89, His-94, Ala-118, and Asp-139 each contribute to the S-adenosyl-L-methionine site. Mg(2+)-binding residues include Asp-139, Asp-165, and Asn-166.

This sequence belongs to the class I-like SAM-binding methyltransferase superfamily. Cation-dependent O-methyltransferase family. Homodimer. Requires Mg(2+) as cofactor.

It carries out the reaction a catechol + S-adenosyl-L-methionine = a guaiacol + S-adenosyl-L-homocysteine + H(+). Its activity is regulated as follows. The metal ion affects the meta and para-regiospecificity of the enzyme as well as the enzyme activity and thermal stability. In terms of biological role, catechol O-methyltransferase that can use various catechol-like compounds. Can produce vanillic acid (meta-form) and iso-vanillic acid (para-form) from protocatechuic acid (PCA). Does not have a regiospecificity, and produces the meta- and para-forms of the products in equal proportion. The protein is Catechol O-methyltransferase of Niastella koreensis (strain DSM 17620 / KACC 11465 / NBRC 106392 / GR20-10).